We begin with the raw amino-acid sequence, 90 residues long: Inactive casein kinase II subunit alpha-2 (90 aa).

ATP contacts are provided by residues 40–48 (VGRGKYSEV) and Lys-63.

Belongs to the protein kinase superfamily. Ser/Thr protein kinase family. CK2 subfamily.

In terms of biological role, the Nipponbare allele of HD6 contains a premature stop codon, resulting in a truncated non-functional product. This Oryza sativa subsp. japonica (Rice) protein is Inactive casein kinase II subunit alpha-2.